Consider the following 1009-residue polypeptide: MICAL-like protein 2 (1009 aa).

Residues 1 to 107 (MAAIKALQEW…YVSQYYNYFH (107 aa)) enclose the Calponin-homology (CH) domain. The tract at residues 1–260 (MAAIKALQEW…KSSNLASRKP (260 aa)) is forms an intramolecular interaction with the C-terminal coiled coil domain keeping the protein in a closed conformation. Phosphoserine occurs at positions 110, 143, and 153. Disordered stretches follow at residues 114–180 (GMAG…PGTA), 247–268 (SVSPKSSNLASRKPGGVTADTR), 348–447 (NSSP…TSKV), and 655–834 (SPSI…TSPV). Residues 144-171 (PAQTQRSPLSPARTNPVVQRNEGGSQRP) show a composition bias toward polar residues. Residues 186–248 (SICGVCGKHV…THHSSEVTSV (63 aa)) form the LIM zinc-binding domain. Ser-249 carries the phosphoserine modification. Residues 261–393 (GGVTADTRPF…QGQTASKGVK (133 aa)) form a necessary and sufficient for interaction with actinins region. A mediates targeting to the cell plasma membrane region spans residues 261-805 (GGVTADTRPF…EDGTRSCKEE (545 aa)). Residues 348-419 (NSSPIGWSSP…AWTSSASKTQ (72 aa)) are compositionally biased toward polar residues. Residues 430-442 (PSAPAPASAPAPA) are compositionally biased toward pro residues. Over residues 694–730 (EGWRARLKPVDKKTPAGRSLEQKEPVLAEPRIGDTSR) the composition is skewed to basic and acidic residues. Low complexity-rich tracts occupy residues 731 to 746 (KASSSSDSSVHITLTS) and 755 to 769 (PAGSGPSPAALSPSP). Phosphoserine occurs at positions 766 and 768. Basic and acidic residues predominate over residues 791–817 (EPKKQEDGTRSCKEEKSPTRWSRERSA). Residues 806-913 (KSPTRWSRER…LMYKSKDQRL (108 aa)) form a forms an intramolecular interaction with the N-terminal Calponin-homology and LIM zinc-binding domains-containing region keeping the protein in a closed conformation region. Ser-832 is modified (phosphoserine). The 148-residue stretch at 833-980 (PVRLHPDYIP…EQEEDQMLEN (148 aa)) folds into the bMERB domain. Residues 841–880 (IPQEELQRQLQDIESQLDALELRGVELEKRLRAAEGDASE) adopt a coiled-coil conformation. The tract at residues 913 to 1009 (LEEQQLDLQG…WSSKSKSGQA (97 aa)) is mediates interaction with RAB13 and is required for transition from the closed to the open conformation.

Interacts with RAB13 (GTP-bound form); competes with RAB8A and is involved in tight junctions assembly. Interacts with RAB8A; competes with RAB13 and is involved in E-cadherin endocytic recycling. Interacts with RAB8B. Interacts (preferentially in opened conformation) with ACTN1 and ACTN4; stimulated by RAB13 activation. Interacts (via calponin-homology (CH) domain) with the filamins FLNA, FLNB and FLNC (via actin-binding domain). In terms of tissue distribution, detected in brain, lung, liver and kidney (at protein level).

It is found in the cell membrane. It localises to the cell junction. The protein resides in the tight junction. The protein localises to the recycling endosome. Its subcellular location is the cell projection. It is found in the neuron projection. It localises to the cytoplasm. The protein resides in the cytoskeleton. In terms of biological role, effector of small Rab GTPases RAB8A and RAB13 which is involved in junctional complexes assembly through the regulation of cell adhesion molecules transport to the plasma membrane and actin cytoskeleton reorganization. Regulates the endocytic recycling of occludins, claudins and E-cadherin to the plasma membrane and may thereby regulate the establishment of tight junctions and adherens junctions. In parallel, may regulate actin cytoskeleton reorganization directly through interaction with F-actin or indirectly through actinins and filamins. Undergoes liquid-liquid phase separation to form tubular recycling endosomes. Plays 2 sequential roles in the biogenesis of tubular recycling endosomes: first organizes phase separation and then the closed form formed by interaction with RAB8A promotes endosomal tubulation. The protein is MICAL-like protein 2 (Micall2) of Mus musculus (Mouse).